Consider the following 91-residue polypeptide: Large ribosomal subunit protein uL22 (91 aa).

It belongs to the universal ribosomal protein uL22 family. Part of the 50S ribosomal subunit.

This protein binds specifically to 23S rRNA; its binding is stimulated by other ribosomal proteins, e.g. L4, L17, and L20. It is important during the early stages of 50S assembly. It makes multiple contacts with different domains of the 23S rRNA in the assembled 50S subunit and ribosome. Its function is as follows. The globular domain of the protein is located near the polypeptide exit tunnel on the outside of the subunit, while an extended beta-hairpin is found that lines the wall of the exit tunnel in the center of the 70S ribosome. The sequence is that of Large ribosomal subunit protein uL22 (rplV) from Loofah witches'-broom phytoplasma.